The sequence spans 174 residues: Major allergen Can f 1 (174 aa).

Positions 1 to 18 (MKTLLLTIGFSLIAILQA) are cleaved as a signal peptide. Cysteines 78 and 169 form a disulfide. N-linked (GlcNAc...) asparagine glycosylation occurs at Asn-80.

This sequence belongs to the calycin superfamily. Lipocalin family. As to expression, tongue epithelial tissue.

The protein resides in the secreted. The protein is Major allergen Can f 1 of Canis lupus familiaris (Dog).